The sequence spans 150 residues: Large ribosomal subunit protein bL9 (150 aa).

Belongs to the bacterial ribosomal protein bL9 family.

Its function is as follows. Binds to the 23S rRNA. The sequence is that of Large ribosomal subunit protein bL9 from Shewanella piezotolerans (strain WP3 / JCM 13877).